A 201-amino-acid chain; its full sequence is UPF0056 membrane protein PH0760 (201 aa).

The next 6 membrane-spanning stretches (helical) occupy residues 8–28, 49–69, 73–93, 111–131, 140–160, and 181–201; these read FMILYTGMFAITNPIGAVPVF, ITVFITLTVFALVGQWIFKFF, IDAFAIAGGILLFRMGMEMLS, VAVIPLAIPLISGPGAITTVM, GIVILTIIAIGLTTYGILYSG, and LILTSMAMQMIINGIKGAFGI.

It belongs to the UPF0056 (MarC) family.

Its subcellular location is the cell membrane. The chain is UPF0056 membrane protein PH0760 from Pyrococcus horikoshii (strain ATCC 700860 / DSM 12428 / JCM 9974 / NBRC 100139 / OT-3).